The primary structure comprises 124 residues: Large ribosomal subunit protein uL22c (124 aa).

Belongs to the universal ribosomal protein uL22 family. As to quaternary structure, part of the 50S ribosomal subunit.

Its subcellular location is the plastid. It localises to the chloroplast. This protein binds specifically to 23S rRNA. Its function is as follows. The globular domain of the protein is located near the polypeptide exit tunnel on the outside of the subunit, while an extended beta-hairpin is found that lines the wall of the exit tunnel in the center of the 70S ribosome. In Amborella trichopoda, this protein is Large ribosomal subunit protein uL22c (rpl22).